We begin with the raw amino-acid sequence, 186 residues long: Nicotinamide-nucleotide adenylyltransferase (186 aa).

This sequence belongs to the archaeal NMN adenylyltransferase family.

The protein resides in the cytoplasm. It catalyses the reaction beta-nicotinamide D-ribonucleotide + ATP + H(+) = diphosphate + NAD(+). The protein operates within cofactor biosynthesis; NAD(+) biosynthesis; NAD(+) from nicotinamide D-ribonucleotide: step 1/1. This chain is Nicotinamide-nucleotide adenylyltransferase, found in Pyrococcus horikoshii (strain ATCC 700860 / DSM 12428 / JCM 9974 / NBRC 100139 / OT-3).